We begin with the raw amino-acid sequence, 644 residues long: Probable potassium transport system protein Kup 2 (644 aa).

Residues 1–21 (MSSDAAAVADRDGSSPGHGGH) form a disordered region. 12 helical membrane passes run 26–46 (LGAM…TSPL), 69–89 (VLSL…VAII), 120–140 (IILL…ITPA), 155–175 (AGFA…LFMI), 183–203 (VGML…VLGT), 231–251 (LAFL…ALYA), 265–285 (WLVF…AMIL), 312–332 (LVIL…TGAF), 360–380 (IYIP…VMSF), 390–410 (YGIA…VVLI), 419–439 (LAAP…GANL), and 444–464 (DGGW…TTWG).

This sequence belongs to the HAK/KUP transporter (TC 2.A.72) family.

Its subcellular location is the cell inner membrane. The catalysed reaction is K(+)(in) + H(+)(in) = K(+)(out) + H(+)(out). Its function is as follows. Transport of potassium into the cell. Likely operates as a K(+):H(+) symporter. In Rhizorhabdus wittichii (strain DSM 6014 / CCUG 31198 / JCM 15750 / NBRC 105917 / EY 4224 / RW1) (Sphingomonas wittichii), this protein is Probable potassium transport system protein Kup 2.